A 427-amino-acid polypeptide reads, in one-letter code: Putative FBD-associated F-box protein At3g50710 (427 aa).

The F-box domain maps to 1 to 53 (MDRISNLSDDLLLKIVSSLPTKDVVVTMLLSKRWKFLWMMVPKLRFDDEFELE). Positions 345–395 (HWEEPSSVPQCLLFHLNIFEWKYYNAGDEEKKVVAYILKNARQLKTATFSA) constitute an FBD domain.

This chain is Putative FBD-associated F-box protein At3g50710, found in Arabidopsis thaliana (Mouse-ear cress).